The chain runs to 170 residues: Peptide deformylase (170 aa).

Positions 94 and 136 each coordinate Fe cation. Glu137 is a catalytic residue. Residue His140 participates in Fe cation binding.

The protein belongs to the polypeptide deformylase family. The cofactor is Fe(2+).

The catalysed reaction is N-terminal N-formyl-L-methionyl-[peptide] + H2O = N-terminal L-methionyl-[peptide] + formate. Its function is as follows. Removes the formyl group from the N-terminal Met of newly synthesized proteins. Requires at least a dipeptide for an efficient rate of reaction. N-terminal L-methionine is a prerequisite for activity but the enzyme has broad specificity at other positions. The protein is Peptide deformylase of Stenotrophomonas maltophilia (strain R551-3).